A 278-amino-acid chain; its full sequence is Small ribosomal subunit protein uS3 (278 aa).

The region spanning 39-107 is the KH type-2 domain; it reads LRKAIAKKYV…KVQLNIVEIS (69 aa). The disordered stretch occupies residues 244-278; sequence AKPKRVTKKAEAEASAEEKPKRAAKKAENITKEEE. Positions 251 to 278 are enriched in basic and acidic residues; the sequence is KKAEAEASAEEKPKRAAKKAENITKEEE.

Belongs to the universal ribosomal protein uS3 family. As to quaternary structure, part of the 30S ribosomal subunit. Forms a tight complex with proteins S10 and S14.

In terms of biological role, binds the lower part of the 30S subunit head. Binds mRNA in the 70S ribosome, positioning it for translation. This is Small ribosomal subunit protein uS3 from Dehalococcoides mccartyi (strain ATCC BAA-2266 / KCTC 15142 / 195) (Dehalococcoides ethenogenes (strain 195)).